A 372-amino-acid polypeptide reads, in one-letter code: Protein REVEILLE 7 (372 aa).

In terms of domain architecture, HTH myb-type spans 71–125; it reads TVTKQREKWSEEEHDRFLEAIKLYGRGWRQIQEHIGTKTAVQIRSHAQKFFSKMA. The H-T-H motif DNA-binding region spans 98–121; that stretch reads WRQIQEHIGTKTAVQIRSHAQKFF. Residues 124 to 204 are disordered; it reads MAQEADSRSE…RCSSPNSCTS (81 aa). A compositionally biased stretch (basic residues) spans 145 to 155; it reads RPKRKPAHPYP. A compositionally biased stretch (pro residues) spans 156–169; the sequence is RKSPVPYTQSPPPN. A compositionally biased stretch (polar residues) spans 178–204; sequence KSPTSVLSSFGSEDQVNRCSSPNSCTS.

It is found in the nucleus. Transcription factor involved in phytochrome A-mediated cotyledon opening. Controlled by the central oscillator mediated by LHY and CCA1. Part of a regulatory circadian feedback loop. Regulates its own expression. This chain is Protein REVEILLE 7 (RVE7), found in Arabidopsis thaliana (Mouse-ear cress).